A 189-amino-acid chain; its full sequence is Peptidyl-tRNA hydrolase (189 aa).

TRNA is bound at residue Y14. Catalysis depends on H19, which acts as the Proton acceptor. The tRNA site is built by Y64, N66, and N112.

Belongs to the PTH family. Monomer.

Its subcellular location is the cytoplasm. It catalyses the reaction an N-acyl-L-alpha-aminoacyl-tRNA + H2O = an N-acyl-L-amino acid + a tRNA + H(+). Functionally, hydrolyzes ribosome-free peptidyl-tRNAs (with 1 or more amino acids incorporated), which drop off the ribosome during protein synthesis, or as a result of ribosome stalling. Catalyzes the release of premature peptidyl moieties from peptidyl-tRNA molecules trapped in stalled 50S ribosomal subunits, and thus maintains levels of free tRNAs and 50S ribosomes. The chain is Peptidyl-tRNA hydrolase from Clostridium botulinum (strain Langeland / NCTC 10281 / Type F).